Here is a 295-residue protein sequence, read N- to C-terminus: Light-independent protochlorophyllide reductase iron-sulfur ATP-binding protein (295 aa).

ATP contacts are provided by residues 39–44 (GIGKST) and Lys-68. Ser-43 provides a ligand contact to Mg(2+). The [4Fe-4S] cluster site is built by Cys-124 and Cys-158. Residue 209–210 (NR) coordinates ATP.

Belongs to the NifH/BchL/ChlL family. As to quaternary structure, homodimer. Protochlorophyllide reductase is composed of three subunits; ChlL, ChlN and ChlB. Requires [4Fe-4S] cluster as cofactor.

It carries out the reaction chlorophyllide a + oxidized 2[4Fe-4S]-[ferredoxin] + 2 ADP + 2 phosphate = protochlorophyllide a + reduced 2[4Fe-4S]-[ferredoxin] + 2 ATP + 2 H2O. It participates in porphyrin-containing compound metabolism; chlorophyll biosynthesis (light-independent). Functionally, component of the dark-operative protochlorophyllide reductase (DPOR) that uses Mg-ATP and reduced ferredoxin to reduce ring D of protochlorophyllide (Pchlide) to form chlorophyllide a (Chlide). This reaction is light-independent. The L component serves as a unique electron donor to the NB-component of the complex, and binds Mg-ATP. The chain is Light-independent protochlorophyllide reductase iron-sulfur ATP-binding protein from Prochlorococcus marinus (strain MIT 9515).